Consider the following 1462-residue polypeptide: Glucosyltransferase-S (1462 aa).

Residues 35–164 (SSVSAETEQQ…RQTAAQENKN (130 aa)) are disordered. The span at 37-52 (VSAETEQQTSDKVVTQ) shows a compositional bias: polar residues. Low complexity predominate over residues 71-85 (TKQAQTEQTQAQSQA). A compositionally biased stretch (polar residues) spans 86-108 (NVADTSTSITKETPSQNITTQAN). Over residues 109-133 (SDDKTVTNTKSEEAQTSEERTKQAE) the composition is skewed to basic and acidic residues. Positions 134 to 149 (EAQATASSQALTQAKA) are enriched in low complexity. Residues 154 to 163 (QRQTAAQENK) are compositionally biased toward polar residues. Cell wall-binding repeat units lie at residues 171 to 190 (IPNVKQIDGKYYYIGSDGQP), 192 to 211 (KNFALTVNNKVLYFDKNTGA), 1095 to 1115 (STGFVNDGNGMTFYSTSGYQA), 1116 to 1136 (KNSFVQDAKGNWYYFDNNGHM), 1137 to 1156 (VYGLQHLNGEVQYFLSNGVQ), 1180 to 1201 (SNGYYSFDNDSKWRYFDASGVM), 1202 to 1221 (AVGLKTINGNTQYFDQDGYQ), 1223 to 1244 (KGAWITGSDGKKRYFDDGSGNM), 1246 to 1266 (VNRFANDKNGDWYYLNSDGIA), 1267 to 1286 (LVGVQTINGKTYYFGQDGKQ), 1310 to 1330 (RNIFATDSQNNWYYFGSDGVA), 1331 to 1350 (VTGSQTIAGKKLYFASDGKQ), 1352 to 1372 (KGSFVTYNGKVHYYHADSGEL), and 1374 to 1394 (VNRFEADKDGNWYYLDSNGEA).

The protein belongs to the glycosyl hydrolase 70 family.

Its subcellular location is the secreted. The catalysed reaction is [(1-&gt;6)-alpha-D-glucosyl](n) + sucrose = [(1-&gt;6)-alpha-D-glucosyl](n+1) + D-fructose. Its function is as follows. Production of extracellular glucans, that are thought to play a key role in the development of the dental plaque because of their ability to adhere to smooth surfaces and mediate the aggregation of bacterial cells and food debris. The sequence is that of Glucosyltransferase-S (gtfD) from Streptococcus mutans serotype c (strain ATCC 700610 / UA159).